Reading from the N-terminus, the 261-residue chain is Acetylglutamate kinase (261 aa).

Substrate is bound by residues 46–47 (GG), Arg68, and Asn160.

This sequence belongs to the acetylglutamate kinase family. ArgB subfamily.

It localises to the cytoplasm. The catalysed reaction is N-acetyl-L-glutamate + ATP = N-acetyl-L-glutamyl 5-phosphate + ADP. The protein operates within amino-acid biosynthesis; L-arginine biosynthesis; N(2)-acetyl-L-ornithine from L-glutamate: step 2/4. Functionally, catalyzes the ATP-dependent phosphorylation of N-acetyl-L-glutamate. The polypeptide is Acetylglutamate kinase (Shewanella loihica (strain ATCC BAA-1088 / PV-4)).